Here is a 406-residue protein sequence, read N- to C-terminus: Argininosuccinate synthase (406 aa).

ATP is bound by residues alanine 10–serine 18 and alanine 37. L-citrulline contacts are provided by tyrosine 88 and serine 93. Glycine 118 is an ATP binding site. Residues threonine 120, asparagine 124, and aspartate 125 each contribute to the L-aspartate site. Asparagine 124 provides a ligand contact to L-citrulline. Arginine 128, serine 179, serine 188, glutamate 264, and tyrosine 276 together coordinate L-citrulline.

Belongs to the argininosuccinate synthase family. Type 1 subfamily. Homotetramer.

The protein resides in the cytoplasm. The enzyme catalyses L-citrulline + L-aspartate + ATP = 2-(N(omega)-L-arginino)succinate + AMP + diphosphate + H(+). Its pathway is amino-acid biosynthesis; L-arginine biosynthesis; L-arginine from L-ornithine and carbamoyl phosphate: step 2/3. The polypeptide is Argininosuccinate synthase (Dinoroseobacter shibae (strain DSM 16493 / NCIMB 14021 / DFL 12)).